A 682-amino-acid polypeptide reads, in one-letter code: Potassium-transporting ATPase ATP-binding subunit (682 aa).

4 helical membrane-spanning segments follow: residues 34-54, 58-78, 219-239, and 254-274; these read PVMF…LAMV, IAGS…TVLF, IALT…TATL, and VLVA…LSAI. D307 serves as the catalytic 4-aspartylphosphate intermediate. Residues D344, E348, 377-384, and K395 contribute to the ATP site; that span reads FTAQSRMS. Mg(2+)-binding residues include D518 and D522. 3 helical membrane-spanning segments follow: residues 588-608, 616-636, and 662-682; these read FAII…LNVM, AILS…PLAL, and LVVP…LGLA.

Belongs to the cation transport ATPase (P-type) (TC 3.A.3) family. Type IA subfamily. In terms of assembly, the system is composed of three essential subunits: KdpA, KdpB and KdpC.

It is found in the cell inner membrane. The catalysed reaction is K(+)(out) + ATP + H2O = K(+)(in) + ADP + phosphate + H(+). Functionally, part of the high-affinity ATP-driven potassium transport (or Kdp) system, which catalyzes the hydrolysis of ATP coupled with the electrogenic transport of potassium into the cytoplasm. This subunit is responsible for energy coupling to the transport system and for the release of the potassium ions to the cytoplasm. This chain is Potassium-transporting ATPase ATP-binding subunit, found in Salmonella enteritidis PT4 (strain P125109).